A 443-amino-acid chain; its full sequence is Amino-acid acetyltransferase (443 aa).

The N-acetyltransferase domain occupies 296 to 435; it reads EQIRRATIND…KEMYNYQRRS (140 aa).

This sequence belongs to the acetyltransferase family. ArgA subfamily. Homohexamer.

It is found in the cytoplasm. The catalysed reaction is L-glutamate + acetyl-CoA = N-acetyl-L-glutamate + CoA + H(+). The protein operates within amino-acid biosynthesis; L-arginine biosynthesis; N(2)-acetyl-L-ornithine from L-glutamate: step 1/4. The protein is Amino-acid acetyltransferase of Enterobacter sp. (strain 638).